The sequence spans 148 residues: uncharacterized protein (148 aa).

The HTH asnC-type domain maps to 4 to 65 (MDKVDLQLIK…IPNLEKLNYM (62 aa)). The H-T-H motif DNA-binding region spans 23-42 (YRELAEMLGTTRQRVARKVD).

This is an uncharacterized protein from Pyrococcus furiosus (strain ATCC 43587 / DSM 3638 / JCM 8422 / Vc1).